The sequence spans 529 residues: Bifunctional purine biosynthesis protein PurH (529 aa).

An MGS-like domain is found at 2–148; sequence QQLRPIHRAL…KNHKDVAIVV (147 aa).

Belongs to the PurH family.

It catalyses the reaction (6R)-10-formyltetrahydrofolate + 5-amino-1-(5-phospho-beta-D-ribosyl)imidazole-4-carboxamide = 5-formamido-1-(5-phospho-D-ribosyl)imidazole-4-carboxamide + (6S)-5,6,7,8-tetrahydrofolate. The enzyme catalyses IMP + H2O = 5-formamido-1-(5-phospho-D-ribosyl)imidazole-4-carboxamide. Its pathway is purine metabolism; IMP biosynthesis via de novo pathway; 5-formamido-1-(5-phospho-D-ribosyl)imidazole-4-carboxamide from 5-amino-1-(5-phospho-D-ribosyl)imidazole-4-carboxamide (10-formyl THF route): step 1/1. It functions in the pathway purine metabolism; IMP biosynthesis via de novo pathway; IMP from 5-formamido-1-(5-phospho-D-ribosyl)imidazole-4-carboxamide: step 1/1. In Photorhabdus laumondii subsp. laumondii (strain DSM 15139 / CIP 105565 / TT01) (Photorhabdus luminescens subsp. laumondii), this protein is Bifunctional purine biosynthesis protein PurH.